The primary structure comprises 865 residues: AP-1 complex subunit gamma-1 (865 aa).

The tract at residues 665 to 690 is disordered; sequence AEPLETPVDEMTQSPQSSLSRAPSTS. The segment covering 675-690 has biased composition (polar residues); the sequence is MTQSPQSSLSRAPSTS. The GAE domain occupies 746–860; that stretch reads KSYPPIVVFD…LDQVDFGKLP (115 aa).

Belongs to the adaptor complexes large subunit family. Adaptor protein complex 1 (AP-1) is a heterotetramer composed of two large adaptins (gamma-type subunit apl4 and beta-type subunit apl2), a medium adaptin (mu-type subunit apm1) and a small adaptin (sigma-type subunit aps1). AP-1 interacts with clathrin.

The protein resides in the cytoplasmic vesicle. It localises to the clathrin-coated vesicle membrane. It is found in the golgi apparatus. Functionally, adaptins are components of the adaptor complexes which link clathrin to receptors in coated vesicles. Clathrin-associated protein complexes are believed to interact with the cytoplasmic tails of membrane proteins, leading to their selection and concentration. The AP-1 complex interacts directly with clathrin. In Schizosaccharomyces pombe (strain 972 / ATCC 24843) (Fission yeast), this protein is AP-1 complex subunit gamma-1 (apl4).